The primary structure comprises 226 residues: Protein-L-isoaspartate(D-aspartate) O-methyltransferase (226 aa).

Residues Val57–Ser60, His65, Ser89, Glu115–His116, Asp147–Gly148, and Thr222 contribute to the S-adenosyl-L-homocysteine site. Ser60 is a catalytic residue.

Belongs to the methyltransferase superfamily. L-isoaspartyl/D-aspartyl protein methyltransferase family. As to quaternary structure, monomer.

Its subcellular location is the cytoplasm. It is found in the cytosol. It carries out the reaction [protein]-L-isoaspartate + S-adenosyl-L-methionine = [protein]-L-isoaspartate alpha-methyl ester + S-adenosyl-L-homocysteine. Functionally, initiates the repair of damaged proteins by catalyzing methyl esterification of L-isoaspartyl and D-aspartyl residues produced by spontaneous isomerization and racemization of L-aspartyl and L-asparaginyl residues in aging peptides and proteins. The protein is Protein-L-isoaspartate(D-aspartate) O-methyltransferase (Pcmt) of Drosophila melanogaster (Fruit fly).